The chain runs to 220 residues: MKSEHIPKATIKRLAMYVQVLETLKREGSQVVSSELLARTCSVNPSQIRKDLAYFGEFGVRGVGYHVQDLIYSIKHSLGVDRVWKCALVGIGNLGKALLRHQDFKFRGFDIVGAFDCDPFKIGEEISGLEVVCTRRLKDAVKELGIEIGLITTPVNRAQRATNFLIEAGVKGIINYSPAMLTVPPDVYVEYVDFFHHFYSVAFSITLDRHQDRMGGDEDD.

Residues 16-55 constitute a DNA-binding region (H-T-H motif); the sequence is MYVQVLETLKREGSQVVSSELLARTCSVNPSQIRKDLAYF. Position 90–95 (90–95) interacts with NAD(+); that stretch reads GIGNLG.

It belongs to the transcriptional regulatory Rex family. As to quaternary structure, homodimer.

It is found in the cytoplasm. Functionally, modulates transcription in response to changes in cellular NADH/NAD(+) redox state. The sequence is that of Redox-sensing transcriptional repressor Rex from Solidesulfovibrio magneticus (strain ATCC 700980 / DSM 13731 / RS-1) (Desulfovibrio magneticus).